We begin with the raw amino-acid sequence, 324 residues long: UDP-N-acetylenolpyruvoylglucosamine reductase (324 aa).

Residues 38–217 (AGGLAELMFQ…IRAEMDAVRQ (180 aa)) enclose the FAD-binding PCMH-type domain. Residue R183 is part of the active site. Catalysis depends on S232, which acts as the Proton donor. Residue E302 is part of the active site.

Belongs to the MurB family. FAD is required as a cofactor.

It localises to the cytoplasm. The catalysed reaction is UDP-N-acetyl-alpha-D-muramate + NADP(+) = UDP-N-acetyl-3-O-(1-carboxyvinyl)-alpha-D-glucosamine + NADPH + H(+). The protein operates within cell wall biogenesis; peptidoglycan biosynthesis. Functionally, cell wall formation. The protein is UDP-N-acetylenolpyruvoylglucosamine reductase of Allorhizobium ampelinum (strain ATCC BAA-846 / DSM 112012 / S4) (Agrobacterium vitis (strain S4)).